We begin with the raw amino-acid sequence, 533 residues long: Tyrosine/DOPA decarboxylase 3 (533 aa).

K319 is modified (N6-(pyridoxal phosphate)lysine).

Belongs to the group II decarboxylase family. As to quaternary structure, homodimer. Pyridoxal 5'-phosphate is required as a cofactor. In terms of tissue distribution, roots.

The catalysed reaction is L-tyrosine + H(+) = tyramine + CO2. It catalyses the reaction L-dopa + H(+) = dopamine + CO2. The enzyme catalyses 5-hydroxy-L-tryptophan + H(+) = serotonin + CO2. In terms of biological role, marginally higher substrate specificity for L-DOPA over L-tyrosine. The chain is Tyrosine/DOPA decarboxylase 3 (TYDC3) from Papaver somniferum (Opium poppy).